The following is a 333-amino-acid chain: Phenylalanine--tRNA ligase alpha subunit (333 aa).

Glutamate 254 contacts Mg(2+).

This sequence belongs to the class-II aminoacyl-tRNA synthetase family. Phe-tRNA synthetase alpha subunit type 1 subfamily. In terms of assembly, tetramer of two alpha and two beta subunits. Requires Mg(2+) as cofactor.

The protein resides in the cytoplasm. The catalysed reaction is tRNA(Phe) + L-phenylalanine + ATP = L-phenylalanyl-tRNA(Phe) + AMP + diphosphate + H(+). This Xylella fastidiosa (strain 9a5c) protein is Phenylalanine--tRNA ligase alpha subunit (pheS).